The following is a 1101-amino-acid chain: Rho GTPase-activating protein 30 (1101 aa).

Residues 20 to 215 (CDLREHLQHS…FILTHVDQLF (196 aa)) form the Rho-GAP domain. Disordered regions lie at residues 305-397 (RKLP…VRAL) and 450-499 (LQPR…LEDS). The segment covering 309 to 319 (LRVEDREEKSS) has biased composition (basic and acidic residues). The span at 348–367 (SSSSQPSSLMPESLESNSME) shows a compositional bias: low complexity. Over residues 451-465 (QPRPSPALGPGPPGS) the composition is skewed to pro residues. S578 is subject to Phosphoserine. The disordered stretch occupies residues 622–848 (LGPKPINWEG…EQKSIDVETE (227 aa)). Basic and acidic residues-rich tracts occupy residues 659-677 (TRQE…REEA), 686-762 (EAGK…KGDD), 786-821 (EVVH…HSED), and 829-844 (DDRK…KSID). Position 875 is a phosphoserine (S875). 2 disordered regions span residues 878–901 (EINE…GMEA) and 968–987 (CPRP…GSRA). At S996 the chain carries Phosphoserine. The tract at residues 1044 to 1076 (SRPLSCLERPPEGTEGSEPRSRLSLPPRELHPV) is disordered. A compositionally biased stretch (basic and acidic residues) spans 1052–1064 (RPPEGTEGSEPRS).

As to quaternary structure, interacts with RHOU in a GTP-independent manner.

It localises to the cytoplasmic vesicle. In terms of biological role, GTPase-activating protein (GAP) for RAC1 and RHOA, but not for CDC42. The polypeptide is Rho GTPase-activating protein 30 (Arhgap30) (Mus musculus (Mouse)).